Consider the following 206-residue polypeptide: Small ribosomal subunit protein uS4 (206 aa).

The S4 RNA-binding domain occupies 96–158; the sequence is SRLDNVVYRM…AKKQLRIQNA (63 aa).

Belongs to the universal ribosomal protein uS4 family. In terms of assembly, part of the 30S ribosomal subunit. Contacts protein S5. The interaction surface between S4 and S5 is involved in control of translational fidelity.

In terms of biological role, one of the primary rRNA binding proteins, it binds directly to 16S rRNA where it nucleates assembly of the body of the 30S subunit. With S5 and S12 plays an important role in translational accuracy. The protein is Small ribosomal subunit protein uS4 of Francisella tularensis subsp. mediasiatica (strain FSC147).